Here is a 417-residue protein sequence, read N- to C-terminus: Serine hydroxymethyltransferase 3 (417 aa).

Residues Leu-121 and 125–127 (GHL) contribute to the (6S)-5,6,7,8-tetrahydrofolate site. Position 229 is an N6-(pyridoxal phosphate)lysine (Lys-229). 354-356 (SPF) is a (6S)-5,6,7,8-tetrahydrofolate binding site.

It belongs to the SHMT family. In terms of assembly, homodimer. Pyridoxal 5'-phosphate is required as a cofactor.

It localises to the cytoplasm. It catalyses the reaction (6R)-5,10-methylene-5,6,7,8-tetrahydrofolate + glycine + H2O = (6S)-5,6,7,8-tetrahydrofolate + L-serine. It participates in one-carbon metabolism; tetrahydrofolate interconversion. Its pathway is amino-acid biosynthesis; glycine biosynthesis; glycine from L-serine: step 1/1. Catalyzes the reversible interconversion of serine and glycine with tetrahydrofolate (THF) serving as the one-carbon carrier. This reaction serves as the major source of one-carbon groups required for the biosynthesis of purines, thymidylate, methionine, and other important biomolecules. Also exhibits THF-independent aldolase activity toward beta-hydroxyamino acids, producing glycine and aldehydes, via a retro-aldol mechanism. The sequence is that of Serine hydroxymethyltransferase 3 from Pseudomonas aeruginosa (strain ATCC 15692 / DSM 22644 / CIP 104116 / JCM 14847 / LMG 12228 / 1C / PRS 101 / PAO1).